The primary structure comprises 251 residues: RING-H2 finger protein ATL10 (251 aa).

Residues 59–79 (MMLLSILICGIICCLGLHYII) traverse the membrane as a helical segment. An RING-type; atypical zinc finger spans residues 135–177 (CVICLSDFVSGEQLRLLPKCNHGFHVRCIDKWLQQHLTCPKCR).

The protein belongs to the RING-type zinc finger family. ATL subfamily.

It localises to the membrane. It carries out the reaction S-ubiquitinyl-[E2 ubiquitin-conjugating enzyme]-L-cysteine + [acceptor protein]-L-lysine = [E2 ubiquitin-conjugating enzyme]-L-cysteine + N(6)-ubiquitinyl-[acceptor protein]-L-lysine.. The protein operates within protein modification; protein ubiquitination. The protein is RING-H2 finger protein ATL10 (ATL10) of Arabidopsis thaliana (Mouse-ear cress).